Consider the following 730-residue polypeptide: Heterogeneous nuclear ribonucleoprotein M (730 aa).

Over residues 1-13 (MAAGVEAAAEVAA) the composition is skewed to low complexity. The tract at residues 1 to 62 (MAAGVEAAAE…NIKRGGNRFE (62 aa)) is disordered. An N-acetylalanine modification is found at A2. K17 participates in a covalent cross-link: Glycyl lysine isopeptide (Lys-Gly) (interchain with G-Cter in SUMO2). At S29 the chain carries Phosphoserine. Residue K37 forms a Glycyl lysine isopeptide (Lys-Gly) (interchain with G-Cter in SUMO2) linkage. Basic and acidic residues predominate over residues 38–50 (GEGERPAQNEKRK). Glycyl lysine isopeptide (Lys-Gly) (interchain with G-Cter in SUMO2) cross-links involve residues K69 and K83. RRM domains are found at residues 71 to 149 (YRAF…EDPD) and 204 to 281 (STVF…MDER). Residue S86 is modified to Phosphoserine. Residues K88 and K127 each participate in a glycyl lysine isopeptide (Lys-Gly) (interchain with G-Cter in SUMO2) cross-link. N6-acetyllysine; alternate is present on K134. Residue K134 forms a Glycyl lysine isopeptide (Lys-Gly) (interchain with G-Cter in SUMO2); alternate linkage. Glycyl lysine isopeptide (Lys-Gly) (interchain with G-Cter in SUMO2) cross-links involve residues K143 and K145. S204 carries the phosphoserine modification. K221 participates in a covalent cross-link: Glycyl lysine isopeptide (Lys-Gly) (interchain with G-Cter in SUMO2). At K277 the chain carries N6-acetyllysine; alternate. A Glycyl lysine isopeptide (Lys-Gly) (interchain with G-Cter in SUMO2); alternate cross-link involves residue K277. Residues K285 and K345 each participate in a glycyl lysine isopeptide (Lys-Gly) (interchain with G-Cter in SUMO2) cross-link. Residues S365 and S377 each carry the phosphoserine modification. Residues K381 and K388 each participate in a glycyl lysine isopeptide (Lys-Gly) (interchain with G-Cter in SUMO2) cross-link. The residue at position 397 (S397) is a Phosphoserine. 4 tandem repeats follow at residues 400–405 (GIERMG), 407–412 (GIDRLG), 415–420 (GMERMG), and 426–431 (GMDRVG). A 27 X 6 AA repeats of [GEVSTPAN]-[ILMV]-[DE]-[RH]-[MLVI]-[GAV] region spans residues 400-608 (GIERMGPGID…ALGAGIERMG (209 aa)). S432 is modified (phosphoserine). Repeat copies occupy residues 433–438 (EIERMG), 440–445 (VMDRMG), and 446–451 (SVERMG). At S452 the chain carries Phosphoserine. 4 tandem repeats follow at residues 453 to 458 (GIERMG), 461 to 466 (GLDHMA), 468 to 473 (SIERMG), and 475 to 480 (TMERIG). S468 is subject to Phosphoserine. S481 carries the phosphoserine modification. Tandem repeats lie at residues 482–487 (GVERMG), 493–498 (GLERMA), 500–505 (PIDRVG), 507–512 (TIERMG), 514–519 (GVERMG), 521–526 (AIERMG), 528–533 (SMERMV), 540–545 (GLERMG), 547–552 (VMDRMA), 554–559 (GLERMG), 562–566 (NLERM), 567–572 (GLERMG), 575–579 (SLERM), 580–585 (GLERMG), 588–593 (SLERMG), and 603–608 (GIERMG). R496 carries the omega-N-methylarginine modification. S528 carries the post-translational modification Phosphoserine. At S575 the chain carries Phosphoserine. Residue S588 is modified to Phosphoserine. Residues S618, S633, and S637 each carry the phosphoserine modification. Residue K651 forms a Glycyl lysine isopeptide (Lys-Gly) (interchain with G-Cter in SUMO2) linkage. Residues 653–729 (CQIFVRNLPF…REIDVRIDRN (77 aa)) form the RRM 3 domain. T665 is subject to Phosphothreonine. K667 participates in a covalent cross-link: Glycyl lysine isopeptide (Lys-Gly) (interchain with G-Cter in SUMO2). An N6-acetyllysine modification is found at K672. Residues K685 and K692 each participate in a glycyl lysine isopeptide (Lys-Gly) (interchain with G-Cter in SUMO2) cross-link. K698 bears the N6-acetyllysine; alternate mark. A Glycyl lysine isopeptide (Lys-Gly) (interchain with G-Cter in SUMO2); alternate cross-link involves residue K698. A Glycyl lysine isopeptide (Lys-Gly) (interchain with G-Cter in SUMO1); alternate cross-link involves residue K698. A Phosphoserine modification is found at S701. K716 participates in a covalent cross-link: Glycyl lysine isopeptide (Lys-Gly) (interchain with G-Cter in SUMO2).

In terms of assembly, identified in the spliceosome C complex. Interacts with PPIA/CYPA. Sumoylated.

It localises to the nucleus. The protein resides in the nucleolus. Functionally, pre-mRNA binding protein in vivo, binds avidly to poly(G) and poly(U) RNA homopolymers in vitro. Involved in splicing. Acts as a receptor for carcinoembryonic antigen in Kupffer cells, may initiate a series of signaling events leading to tyrosine phosphorylation of proteins and induction of IL-1 alpha, IL-6, IL-10 and tumor necrosis factor alpha cytokines. The sequence is that of Heterogeneous nuclear ribonucleoprotein M (HNRNPM) from Homo sapiens (Human).